The primary structure comprises 341 residues: Phosphate acyltransferase (341 aa).

Belongs to the PlsX family. As to quaternary structure, homodimer. Probably interacts with PlsY.

It localises to the cytoplasm. The catalysed reaction is a fatty acyl-[ACP] + phosphate = an acyl phosphate + holo-[ACP]. It functions in the pathway lipid metabolism; phospholipid metabolism. In terms of biological role, catalyzes the reversible formation of acyl-phosphate (acyl-PO(4)) from acyl-[acyl-carrier-protein] (acyl-ACP). This enzyme utilizes acyl-ACP as fatty acyl donor, but not acyl-CoA. In Aliivibrio salmonicida (strain LFI1238) (Vibrio salmonicida (strain LFI1238)), this protein is Phosphate acyltransferase.